The sequence spans 211 residues: Glycerol-3-phosphate acyltransferase (211 aa).

A run of 5 helical transmembrane segments spans residues 8-28 (YCLA…LILT), 84-104 (LALP…WLGF), 116-136 (VLLA…FAVA), 145-165 (AALC…GMGL), and 170-190 (LAQS…LVFL).

It belongs to the PlsY family. Probably interacts with PlsX.

Its subcellular location is the cell inner membrane. It carries out the reaction an acyl phosphate + sn-glycerol 3-phosphate = a 1-acyl-sn-glycero-3-phosphate + phosphate. It functions in the pathway lipid metabolism; phospholipid metabolism. Its function is as follows. Catalyzes the transfer of an acyl group from acyl-phosphate (acyl-PO(4)) to glycerol-3-phosphate (G3P) to form lysophosphatidic acid (LPA). This enzyme utilizes acyl-phosphate as fatty acyl donor, but not acyl-CoA or acyl-ACP. The chain is Glycerol-3-phosphate acyltransferase from Granulibacter bethesdensis (strain ATCC BAA-1260 / CGDNIH1).